Consider the following 158-residue polypeptide: Endoribonuclease YbeY (158 aa).

Zn(2+) contacts are provided by histidine 119, histidine 123, and aspartate 129.

Belongs to the endoribonuclease YbeY family. The cofactor is Zn(2+).

It is found in the cytoplasm. Its function is as follows. Single strand-specific metallo-endoribonuclease involved in late-stage 70S ribosome quality control and in maturation of the 3' terminus of the 16S rRNA. The chain is Endoribonuclease YbeY from Chlamydia abortus (strain DSM 27085 / S26/3) (Chlamydophila abortus).